A 1072-amino-acid chain; its full sequence is Carbamoyl phosphate synthase large chain (1072 aa).

Residues 1–401 are carboxyphosphate synthetic domain; sequence MPKRLDINTI…SLLKAVRSLE (401 aa). The ATP site is built by Arg129, Arg169, Gly175, Gly176, Lys208, Ile210, Glu215, Gly241, Val242, His243, Gln284, and Glu298. The ATP-grasp 1 domain maps to 133–327; the sequence is RTLMQDLNEP…IAKLAAKIAV (195 aa). Mg(2+)-binding residues include Gln284, Glu298, and Asn300. The Mn(2+) site is built by Gln284, Glu298, and Asn300. Residues 402–546 form an oligomerization domain region; that stretch reads LGIYHLELDH…YSTYADENES (145 aa). The tract at residues 547–929 is carbamoyl phosphate synthetic domain; it reads IVTDRKSVVV…ALYKGLVASG (383 aa). Residues 671–861 form the ATP-grasp 2 domain; sequence EAALTKLGIP…MANVATKVIL (191 aa). Residues Arg707, Arg746, Glu752, Gly777, Val778, His779, Ser780, Gln820, and Glu832 each coordinate ATP. 3 residues coordinate Mg(2+): Gln820, Glu832, and Asn834. Residues Gln820, Glu832, and Asn834 each coordinate Mn(2+). One can recognise an MGS-like domain in the interval 930-1072; it reads INIPTHGSVI…QTKRHEVVHA (143 aa). The interval 930–1072 is allosteric domain; sequence INIPTHGSVI…QTKRHEVVHA (143 aa).

The protein belongs to the CarB family. Composed of two chains; the small (or glutamine) chain promotes the hydrolysis of glutamine to ammonia, which is used by the large (or ammonia) chain to synthesize carbamoyl phosphate. Tetramer of heterodimers (alpha,beta)4. Requires Mg(2+) as cofactor. Mn(2+) is required as a cofactor.

The enzyme catalyses hydrogencarbonate + L-glutamine + 2 ATP + H2O = carbamoyl phosphate + L-glutamate + 2 ADP + phosphate + 2 H(+). It carries out the reaction hydrogencarbonate + NH4(+) + 2 ATP = carbamoyl phosphate + 2 ADP + phosphate + 2 H(+). Its pathway is amino-acid biosynthesis; L-arginine biosynthesis; carbamoyl phosphate from bicarbonate: step 1/1. The protein operates within pyrimidine metabolism; UMP biosynthesis via de novo pathway; (S)-dihydroorotate from bicarbonate: step 1/3. Functionally, large subunit of the glutamine-dependent carbamoyl phosphate synthetase (CPSase). CPSase catalyzes the formation of carbamoyl phosphate from the ammonia moiety of glutamine, carbonate, and phosphate donated by ATP, constituting the first step of 2 biosynthetic pathways, one leading to arginine and/or urea and the other to pyrimidine nucleotides. The large subunit (synthetase) binds the substrates ammonia (free or transferred from glutamine from the small subunit), hydrogencarbonate and ATP and carries out an ATP-coupled ligase reaction, activating hydrogencarbonate by forming carboxy phosphate which reacts with ammonia to form carbamoyl phosphate. This chain is Carbamoyl phosphate synthase large chain, found in Bacillus cereus (strain AH187).